A 390-amino-acid chain; its full sequence is Chalcone synthase (390 aa).

The active site involves cysteine 164.

It belongs to the thiolase-like superfamily. Chalcone/stilbene synthases family.

It carries out the reaction (E)-4-coumaroyl-CoA + 3 malonyl-CoA + 3 H(+) = 2',4,4',6'-tetrahydroxychalcone + 3 CO2 + 4 CoA. It functions in the pathway secondary metabolite biosynthesis; flavonoid biosynthesis. Functionally, the primary product of this enzyme is 4,2',4',6'-tetrahydroxychalcone (also termed naringenin-chalcone or chalcone) which can under specific conditions spontaneously isomerize into naringenin. The sequence is that of Chalcone synthase (CHS) from Antirrhinum majus (Garden snapdragon).